The following is a 311-amino-acid chain: Coproporphyrin III ferrochelatase 1 (311 aa).

Fe-coproporphyrin III-binding positions include tyrosine 12, arginine 29, 45–46, serine 53, and tyrosine 124; that span reads RY. Fe(2+) contacts are provided by histidine 182 and glutamate 263.

This sequence belongs to the ferrochelatase family.

It is found in the cytoplasm. It carries out the reaction Fe-coproporphyrin III + 2 H(+) = coproporphyrin III + Fe(2+). It functions in the pathway porphyrin-containing compound metabolism; protoheme biosynthesis. Functionally, involved in coproporphyrin-dependent heme b biosynthesis. Catalyzes the insertion of ferrous iron into coproporphyrin III to form Fe-coproporphyrin III. This is Coproporphyrin III ferrochelatase 1 from Bacillus cereus (strain ZK / E33L).